The following is a 279-amino-acid chain: Glutamate racemase (279 aa).

Substrate is bound by residues 13–14 and 45–46; these read DS and YG. The active-site Proton donor/acceptor is the Cys76. 77-78 contributes to the substrate binding site; sequence NT. Cys185 acts as the Proton donor/acceptor in catalysis. 186–187 is a binding site for substrate; sequence TH.

The protein belongs to the aspartate/glutamate racemases family.

It carries out the reaction L-glutamate = D-glutamate. The protein operates within cell wall biogenesis; peptidoglycan biosynthesis. Provides the (R)-glutamate required for cell wall biosynthesis. The polypeptide is Glutamate racemase (Synechocystis sp. (strain ATCC 27184 / PCC 6803 / Kazusa)).